The sequence spans 318 residues: Putative enoyl-CoA hydratase EchA13 (318 aa).

Residues Leu90–Arg110 are disordered.

Belongs to the enoyl-CoA hydratase/isomerase family.

This Mycobacterium tuberculosis (strain ATCC 25618 / H37Rv) protein is Putative enoyl-CoA hydratase EchA13 (echA13).